The following is a 559-amino-acid chain: 3-phosphoinositide-dependent protein kinase 1 (559 aa).

Y9 carries the phosphotyrosine; by SRC and INSR modification. A Phosphoserine modification is found at S25. A disordered region spans residues 25 to 83 (SPSMVRSQTEPGSSPGIPSGVSRQGSTMDGTTAEARPSTNPLQQHPAQLPPQPRKKRPE). Over residues 35-44 (PGSSPGIPSG) the composition is skewed to low complexity. The segment covering 45 to 54 (VSRQGSTMDG) has biased composition (polar residues). Residues 85 to 345 (FKFGKILGEG…YGPLKAHPFF (261 aa)) enclose the Protein kinase domain. ATP contacts are provided by residues 95–97 (SFS) and K114. Residues 116–160 (LEKRHIIKENKVPYVTRERDVMSRLDHPFFVKLYFTFQDDEKLYF) form a PIF-pocket region. ATP-binding positions include 163–165 (SYA) and E169. Catalysis depends on D208, which acts as the Proton acceptor. ATP contacts are provided by E212 and D226. Residue S244 is modified to Phosphoserine. At K307 the chain carries N6-acetyllysine. Position 357 is a phosphothreonine; by MELK (T357). A phosphotyrosine; by SRC and INSR mark is found at Y376 and Y379. S396 is subject to Phosphoserine. Position 397 is a phosphoserine; by MAP3K5 (S397). The residue at position 399 (S399) is a Phosphoserine. At S401 the chain carries Phosphoserine; by MAP3K5. S413 bears the Phosphoserine mark. Positions 462–553 (KMGPVDKRKG…EVWRQQYQSN (92 aa)) constitute a PH domain. A Phosphoserine; by PKC/PRKCQ modification is found at S504. T516 carries the phosphothreonine; by autocatalysis modification. A Phosphoserine; by PKC/PRKCQ modification is found at S532.

Belongs to the protein kinase superfamily. AGC Ser/Thr protein kinase family. PDPK1 subfamily. As to quaternary structure, homodimer in its autoinhibited state. Active as monomer. Interacts with NPRL2, PAK1, PTK2B, GRB14, STRAP and IKKB. The Tyr-9 phosphorylated form interacts with SRC, RASA1 and CRK (via their SH2 domains). Interacts with SGK3 in a phosphorylation-dependent manner. The tyrosine-phosphorylated form interacts with PTPN6. The Ser-244 phosphorylated form interacts with YWHAH and YWHAQ. Binds INSR in response to insulin. Interacts (via PH domain) with SMAD3, SMAD4 and SMAD7. Interacts with PKN2; the interaction stimulates PDPK1 autophosphorylation, its PI(3,4,5)P3-dependent kinase activity toward 'Ser-473' of AKT1 but also activates its kinase activity toward PRKCD and PRKCZ. Interacts with PKN1 (via C-terminus) and PPARG. Phosphorylation on Ser-244 in the activation loop is required for full activity. PDPK1 itself can autophosphorylate Ser-244, leading to its own activation. Autophosphorylation is inhibited by the apoptotic C-terminus cleavage product of PKN2. Tyr-9 phosphorylation is critical for stabilization of both PDPK1 and the PDPK1/SRC complex via HSP90-mediated protection of PDPK1 degradation. Angiotensin II stimulates the tyrosine phosphorylation of PDPK1 in vascular smooth muscle in a calcium- and SRC-dependent manner. Phosphorylated on Tyr-9, Tyr-376 and Tyr-379 by INSR in response to insulin. Palmitate negatively regulates autophosphorylation at Ser-244 and palmitate-induced phosphorylation at Ser-532 and Ser-504 by PKC/PRKCQ negatively regulates its ability to phosphorylate PKB/AKT1. Phosphorylation at Thr-357 by MELK partially inhibits kinase activity, the inhibition is cooperatively enhanced by phosphorylation at Ser-397 and Ser-401 by MAP3K5. In terms of processing, monoubiquitinated in the kinase domain, deubiquitinated by USP4. Highly expressed in heart, brain, liver and testis, also expressed in embryonic cells.

The protein localises to the cytoplasm. It localises to the nucleus. Its subcellular location is the cell membrane. The protein resides in the cell junction. It is found in the focal adhesion. The enzyme catalyses L-seryl-[protein] + ATP = O-phospho-L-seryl-[protein] + ADP + H(+). It catalyses the reaction L-threonyl-[protein] + ATP = O-phospho-L-threonyl-[protein] + ADP + H(+). Homodimerization regulates its activity by maintaining the kinase in an autoinhibitory conformation. NPRL2 down-regulates its activity by interfering with tyrosine phosphorylation at the Tyr-9, Tyr-376 and Tyr-379 residues. The 14-3-3 protein YWHAQ acts as a negative regulator by association with the residues surrounding the Ser-244 residue. STRAP positively regulates its activity by enhancing its autophosphorylation and by stimulating its dissociation from YWHAQ. SMAD2, SMAD3, SMAD4 and SMAD7 also positively regulate its activity by stimulating its dissociation from YWHAQ. Activated by phosphorylation on Tyr-9, Tyr-376 and Tyr-379 by INSR in response to insulin. In terms of biological role, serine/threonine kinase which acts as a master kinase, phosphorylating and activating a subgroup of the AGC family of protein kinases. Its targets include: protein kinase B (PKB/AKT1, PKB/AKT2, PKB/AKT3), p70 ribosomal protein S6 kinase (RPS6KB1), p90 ribosomal protein S6 kinase (RPS6KA1, RPS6KA2 and RPS6KA3), cyclic AMP-dependent protein kinase (PRKACA), protein kinase C (PRKCD and PRKCZ), serum and glucocorticoid-inducible kinase (SGK1, SGK2 and SGK3), p21-activated kinase-1 (PAK1), TSSK3, protein kinase PKN (PKN1 and PKN2). Plays a central role in the transduction of signals from insulin by providing the activating phosphorylation to PKB/AKT1, thus propagating the signal to downstream targets controlling cell proliferation and survival, as well as glucose and amino acid uptake and storage. Negatively regulates the TGF-beta-induced signaling by: modulating the association of SMAD3 and SMAD7 with TGF-beta receptor, phosphorylating SMAD2, SMAD3, SMAD4 and SMAD7, preventing the nuclear translocation of SMAD3 and SMAD4 and the translocation of SMAD7 from the nucleus to the cytoplasm in response to TGF-beta. Activates PPARG transcriptional activity and promotes adipocyte differentiation. Activates the NF-kappa-B pathway via phosphorylation of IKKB. The tyrosine phosphorylated form is crucial for the regulation of focal adhesions by angiotensin II. Controls proliferation, survival, and growth of developing pancreatic cells. Participates in the regulation of Ca(2+) entry and Ca(2+)-activated K(+) channels of mast cells. Essential for the motility of vascular endothelial cells (ECs) and is involved in the regulation of their chemotaxis. Plays a critical role in cardiac homeostasis by serving as a dual effector for cell survival and beta-adrenergic response. Plays an important role during thymocyte development by regulating the expression of key nutrient receptors on the surface of pre-T cells and mediating Notch-induced cell growth and proliferative responses. Provides negative feedback inhibition to toll-like receptor-mediated NF-kappa-B activation in macrophages. This is 3-phosphoinositide-dependent protein kinase 1 (Pdpk1) from Mus musculus (Mouse).